Here is a 154-residue protein sequence, read N- to C-terminus: Myoglobin (154 aa).

The region spanning glycine 2 to lysine 148 is the Globin domain. 2 positions are modified to phosphoserine: serine 4 and serine 32. Residue histidine 65 participates in nitrite binding. Residue histidine 65 participates in O2 binding. Threonine 68 is subject to Phosphothreonine. Position 94 (histidine 94) interacts with heme b. Serine 121 and serine 133 each carry phosphoserine.

It belongs to the globin family. In terms of assembly, monomeric.

Its subcellular location is the cytoplasm. The protein localises to the sarcoplasm. The catalysed reaction is Fe(III)-heme b-[protein] + nitric oxide + H2O = Fe(II)-heme b-[protein] + nitrite + 2 H(+). It carries out the reaction H2O2 + AH2 = A + 2 H2O. Its function is as follows. Monomeric heme protein which primary function is to store oxygen and facilitate its diffusion within muscle tissues. Reversibly binds oxygen through a pentacoordinated heme iron and enables its timely and efficient release as needed during periods of heightened demand. Depending on the oxidative conditions of tissues and cells, and in addition to its ability to bind oxygen, it also has a nitrite reductase activity whereby it regulates the production of bioactive nitric oxide. Under stress conditions, like hypoxia and anoxia, it also protects cells against reactive oxygen species thanks to its pseudoperoxidase activity. The sequence is that of Myoglobin from Rattus norvegicus (Rat).